A 418-amino-acid chain; its full sequence is Glutamyl-tRNA reductase (418 aa).

Substrate is bound by residues 49–52 (TCNR), Ser-109, 114–116 (EPQ), and Gln-120. The active-site Nucleophile is Cys-50. 189 to 194 (GAGETI) lines the NADP(+) pocket.

It belongs to the glutamyl-tRNA reductase family. In terms of assembly, homodimer.

It carries out the reaction (S)-4-amino-5-oxopentanoate + tRNA(Glu) + NADP(+) = L-glutamyl-tRNA(Glu) + NADPH + H(+). It functions in the pathway porphyrin-containing compound metabolism; protoporphyrin-IX biosynthesis; 5-aminolevulinate from L-glutamyl-tRNA(Glu): step 1/2. Its function is as follows. Catalyzes the NADPH-dependent reduction of glutamyl-tRNA(Glu) to glutamate 1-semialdehyde (GSA). The chain is Glutamyl-tRNA reductase from Escherichia coli O9:H4 (strain HS).